The following is a 92-amino-acid chain: Acylphosphatase (92 aa).

Residues 5 to 92 (YIVAYVYGVV…TPFETFSIRY (88 aa)) form the Acylphosphatase-like domain. Catalysis depends on residues R20 and N38.

It belongs to the acylphosphatase family.

It carries out the reaction an acyl phosphate + H2O = a carboxylate + phosphate + H(+). The polypeptide is Acylphosphatase (acyP) (Yersinia pseudotuberculosis serotype O:1b (strain IP 31758)).